Here is a 364-residue protein sequence, read N- to C-terminus: Protein PTOV1 homolog (364 aa).

Residues 187 to 207 (AKRKPGVKTPKQPQPEEPPPV) are disordered.

This sequence belongs to the Mediator complex subunit 25 family. PTOV1 subfamily.

The sequence is that of Protein PTOV1 homolog from Drosophila melanogaster (Fruit fly).